A 443-amino-acid polypeptide reads, in one-letter code: Carboxypeptidase M (443 aa).

An N-terminal signal peptide occupies residues 1–17 (MDFPCLWLGLLLPLVAA). The Peptidase M14 domain occupies 21 to 311 (NYHRQEGMEA…ASLIEYIKQV (291 aa)). N38 is a glycosylation site (N-linked (GlcNAc...) asparagine). Zn(2+)-binding residues include H83 and E86. Residues N115 and N164 are each glycosylated (N-linked (GlcNAc...) asparagine). Disulfide bonds link C138/C285, C242/C284, and C341/C410. H190 is a binding site for Zn(2+). The active-site Proton donor/acceptor is E281. 2 N-linked (GlcNAc...) asparagine glycosylation sites follow: N363 and N384. S423 carries GPI-anchor amidated serine lipidation. Positions 424 to 443 (AATKPSLFLFLVSLLHIFFK) are cleaved as a propeptide — removed in mature form.

It belongs to the peptidase M14 family. Zn(2+) serves as cofactor.

It localises to the cell membrane. It catalyses the reaction Cleavage of C-terminal arginine or lysine residues from polypeptides.. With respect to regulation, inhibited by O-phenanthroline and MGTA and activated by cobalt. Functionally, specifically removes C-terminal basic residues (Arg or Lys) from peptides and proteins. It is believed to play important roles in the control of peptide hormone and growth factor activity at the cell surface, and in the membrane-localized degradation of extracellular proteins. This Homo sapiens (Human) protein is Carboxypeptidase M (CPM).